Reading from the N-terminus, the 523-residue chain is Bifunctional purine biosynthesis protein PurH (523 aa).

One can recognise an MGS-like domain in the interval 1–152 (MSTDDGRRPI…KNHPSAAVVT (152 aa)).

This sequence belongs to the PurH family.

The enzyme catalyses (6R)-10-formyltetrahydrofolate + 5-amino-1-(5-phospho-beta-D-ribosyl)imidazole-4-carboxamide = 5-formamido-1-(5-phospho-D-ribosyl)imidazole-4-carboxamide + (6S)-5,6,7,8-tetrahydrofolate. It catalyses the reaction IMP + H2O = 5-formamido-1-(5-phospho-D-ribosyl)imidazole-4-carboxamide. Its pathway is purine metabolism; IMP biosynthesis via de novo pathway; 5-formamido-1-(5-phospho-D-ribosyl)imidazole-4-carboxamide from 5-amino-1-(5-phospho-D-ribosyl)imidazole-4-carboxamide (10-formyl THF route): step 1/1. The protein operates within purine metabolism; IMP biosynthesis via de novo pathway; IMP from 5-formamido-1-(5-phospho-D-ribosyl)imidazole-4-carboxamide: step 1/1. This chain is Bifunctional purine biosynthesis protein PurH, found in Mycobacterium bovis (strain BCG / Pasteur 1173P2).